The following is a 617-amino-acid chain: Proline--tRNA ligase (617 aa).

This sequence belongs to the class-II aminoacyl-tRNA synthetase family. ProS type 1 subfamily. Homodimer.

It localises to the cytoplasm. It carries out the reaction tRNA(Pro) + L-proline + ATP = L-prolyl-tRNA(Pro) + AMP + diphosphate. Catalyzes the attachment of proline to tRNA(Pro) in a two-step reaction: proline is first activated by ATP to form Pro-AMP and then transferred to the acceptor end of tRNA(Pro). As ProRS can inadvertently accommodate and process non-cognate amino acids such as alanine and cysteine, to avoid such errors it has two additional distinct editing activities against alanine. One activity is designated as 'pretransfer' editing and involves the tRNA(Pro)-independent hydrolysis of activated Ala-AMP. The other activity is designated 'posttransfer' editing and involves deacylation of mischarged Ala-tRNA(Pro). The misacylated Cys-tRNA(Pro) is not edited by ProRS. The sequence is that of Proline--tRNA ligase from Streptococcus pneumoniae serotype 19F (strain G54).